Here is a 220-residue protein sequence, read N- to C-terminus: Deoxyribose-phosphate aldolase 1 (220 aa).

Aspartate 89 functions as the Proton donor/acceptor in the catalytic mechanism. Residue lysine 151 is the Schiff-base intermediate with acetaldehyde of the active site. The active-site Proton donor/acceptor is the lysine 180.

It belongs to the DeoC/FbaB aldolase family. DeoC type 1 subfamily.

The protein localises to the cytoplasm. The enzyme catalyses 2-deoxy-D-ribose 5-phosphate = D-glyceraldehyde 3-phosphate + acetaldehyde. It functions in the pathway carbohydrate degradation; 2-deoxy-D-ribose 1-phosphate degradation; D-glyceraldehyde 3-phosphate and acetaldehyde from 2-deoxy-alpha-D-ribose 1-phosphate: step 2/2. In terms of biological role, catalyzes a reversible aldol reaction between acetaldehyde and D-glyceraldehyde 3-phosphate to generate 2-deoxy-D-ribose 5-phosphate. In Staphylococcus aureus (strain bovine RF122 / ET3-1), this protein is Deoxyribose-phosphate aldolase 1.